Consider the following 345-residue polypeptide: N(4)-(Beta-N-acetylglucosaminyl)-L-asparaginase (345 aa).

Residues 1 to 23 form the signal peptide; sequence MARKWNLPFLLLPLVLGIPLVRG. Asn38 is a glycosylation site (N-linked (GlcNAc...) asparagine). Cys64 and Cys69 are joined by a disulfide. An N-linked (GlcNAc...) asparagine glycan is attached at Asn149. Cysteines 163 and 179 form a disulfide. The active-site Nucleophile is the Thr205. Substrate-binding positions include 233 to 236 and 256 to 259; these read RVGD and TGDG. Cys285 and Cys305 are oxidised to a cystine. N-linked (GlcNAc...) asparagine glycosylation is present at Asn307. An intrachain disulfide couples Cys316 to Cys344.

Belongs to the Ntn-hydrolase family. Heterotetramer of two alpha and two beta chains arranged as a dimer of alpha/beta heterodimers. Post-translationally, N-glycosylated. Cleaved into an alpha and beta chain by autocatalysis; this activates the enzyme. The N-terminal residue of the beta subunit is responsible for the nucleophile hydrolase activity.

The protein resides in the lysosome. The enzyme catalyses N(4)-(beta-N-acetyl-D-glucosaminyl)-L-asparagine + H2O = N-acetyl-beta-D-glucosaminylamine + L-aspartate + H(+). In terms of biological role, cleaves the GlcNAc-Asn bond which joins oligosaccharides to the peptide of asparagine-linked glycoproteins. The polypeptide is N(4)-(Beta-N-acetylglucosaminyl)-L-asparaginase (Aga) (Rattus norvegicus (Rat)).